A 161-amino-acid chain; its full sequence is MDDIYKAAVEQLTEEQKNEFKAAFDIFVLGAEDGCISTKELGKVMRMLGQNPTPEELQEMIDEVDEDGSGTVDFDEFLVMMVRCMKDDSKGKSEEELSDLFRMFDKNADGYIDLDELKMMLQATGETITEDDIEELMKDGDKNNDGRIDYDEFLEFMKGVE.

Position 1 is an N-acetylmethionine (M1). 4 EF-hand domains span residues 16 to 51, 52 to 87, 92 to 127, and 128 to 161; these read QKNE…LGQN, PTPE…CMKD, KSEE…TGET, and ITED…KGVE. Ca(2+)-binding residues include D65, D67, S69, T71, and E76. Position 98 is a phosphoserine (S98). Ca(2+) contacts are provided by D105, N107, D109, Y111, E116, D141, N143, D145, R147, and E152.

The protein belongs to the troponin C family.

In terms of biological role, troponin is the central regulatory protein of striated muscle contraction. Tn consists of three components: Tn-I which is the inhibitor of actomyosin ATPase, Tn-T which contains the binding site for tropomyosin and Tn-C. The binding of calcium to Tn-C abolishes the inhibitory action of Tn on actin filaments. The chain is Troponin C, slow skeletal and cardiac muscles (Tnnc1) from Mus musculus (Mouse).